Reading from the N-terminus, the 51-residue chain is MKKANPFTHAGLPFLLFPSIMFLSNKSMEYVVFHLDLVYYVTHTPRIFSGR.

This is an uncharacterized protein from Bacillus subtilis (strain 168).